We begin with the raw amino-acid sequence, 195 residues long: Peptidyl-tRNA hydrolase (195 aa).

TRNA is bound at residue tyrosine 17. The active-site Proton acceptor is the histidine 22. TRNA contacts are provided by tyrosine 68, asparagine 70, and asparagine 116.

It belongs to the PTH family. In terms of assembly, monomer.

Its subcellular location is the cytoplasm. It catalyses the reaction an N-acyl-L-alpha-aminoacyl-tRNA + H2O = an N-acyl-L-amino acid + a tRNA + H(+). Functionally, hydrolyzes ribosome-free peptidyl-tRNAs (with 1 or more amino acids incorporated), which drop off the ribosome during protein synthesis, or as a result of ribosome stalling. Its function is as follows. Catalyzes the release of premature peptidyl moieties from peptidyl-tRNA molecules trapped in stalled 50S ribosomal subunits, and thus maintains levels of free tRNAs and 50S ribosomes. In Shewanella putrefaciens (strain CN-32 / ATCC BAA-453), this protein is Peptidyl-tRNA hydrolase.